Consider the following 103-residue polypeptide: Protamine-2 (103 aa).

Positions 1 to 103 (MVRYRTRSLS…RTRRRRCRRY (103 aa)) are disordered. Residues Ser-8 and Ser-10 each carry the phosphoserine modification. A compositionally biased stretch (basic and acidic residues) spans 8–17 (SLSERPHEVH). Positions 18-29 (GQQVHGQDQGHN) are enriched in low complexity. A Phosphoserine modification is found at Ser-37. Basic and acidic residues predominate over residues 39–48 (EHVEVYERTH). A compositionally biased stretch (basic residues) spans 49-103 (QGHSHHRRRRCSQRRLHRIHRRRHRSCRRRRRRSCRHRRRHRRGCRTRRRRCRRY).

This sequence belongs to the protamine P2 family. In terms of assembly, interacts with TDRP. Proteolytic processing into mature chains is required for histone eviction during spermatogenesis. Transition proteins (TNP1 and TNP2) are required for processing. Testis.

The protein localises to the nucleus. It localises to the chromosome. In terms of biological role, protamines substitute for histones in the chromatin of sperm during the haploid phase of spermatogenesis. They compact sperm DNA into a highly condensed, stable and inactive complex. In Erythrocebus patas (Red guenon), this protein is Protamine-2 (PRM2).